A 185-amino-acid chain; its full sequence is Elongation factor P (185 aa).

The protein belongs to the elongation factor P family.

It is found in the cytoplasm. Its pathway is protein biosynthesis; polypeptide chain elongation. Its function is as follows. Involved in peptide bond synthesis. Stimulates efficient translation and peptide-bond synthesis on native or reconstituted 70S ribosomes in vitro. Probably functions indirectly by altering the affinity of the ribosome for aminoacyl-tRNA, thus increasing their reactivity as acceptors for peptidyl transferase. This chain is Elongation factor P, found in Clostridium tetani (strain Massachusetts / E88).